The chain runs to 142 residues: uncharacterized protein (142 aa).

This is an uncharacterized protein from Invertebrate iridescent virus 3 (IIV-3).